The primary structure comprises 431 residues: Enolase (431 aa).

Gln-167 is a binding site for (2R)-2-phosphoglycerate. The Proton donor role is filled by Glu-209. Residues Asp-246, Glu-289, and Asp-316 each coordinate Mg(2+). Positions 341, 370, 371, and 392 each coordinate (2R)-2-phosphoglycerate. The Proton acceptor role is filled by Lys-341.

The protein belongs to the enolase family. As to quaternary structure, component of the RNA degradosome, a multiprotein complex involved in RNA processing and mRNA degradation. Mg(2+) is required as a cofactor.

It is found in the cytoplasm. The protein resides in the secreted. The protein localises to the cell surface. The enzyme catalyses (2R)-2-phosphoglycerate = phosphoenolpyruvate + H2O. It participates in carbohydrate degradation; glycolysis; pyruvate from D-glyceraldehyde 3-phosphate: step 4/5. Its function is as follows. Catalyzes the reversible conversion of 2-phosphoglycerate (2-PG) into phosphoenolpyruvate (PEP). It is essential for the degradation of carbohydrates via glycolysis. This Shewanella baltica (strain OS155 / ATCC BAA-1091) protein is Enolase.